We begin with the raw amino-acid sequence, 162 residues long: 6,7-dimethyl-8-ribityllumazine synthase (162 aa).

Residues phenylalanine 22, 56 to 58 (TFE), and 80 to 82 (AVI) each bind 5-amino-6-(D-ribitylamino)uracil. 85 to 86 (GT) serves as a coordination point for (2S)-2-hydroxy-3-oxobutyl phosphate. The Proton donor role is filled by histidine 88. Methionine 113 is a 5-amino-6-(D-ribitylamino)uracil binding site. Arginine 127 contacts (2S)-2-hydroxy-3-oxobutyl phosphate.

This sequence belongs to the DMRL synthase family.

The enzyme catalyses (2S)-2-hydroxy-3-oxobutyl phosphate + 5-amino-6-(D-ribitylamino)uracil = 6,7-dimethyl-8-(1-D-ribityl)lumazine + phosphate + 2 H2O + H(+). It functions in the pathway cofactor biosynthesis; riboflavin biosynthesis; riboflavin from 2-hydroxy-3-oxobutyl phosphate and 5-amino-6-(D-ribitylamino)uracil: step 1/2. Catalyzes the formation of 6,7-dimethyl-8-ribityllumazine by condensation of 5-amino-6-(D-ribitylamino)uracil with 3,4-dihydroxy-2-butanone 4-phosphate. This is the penultimate step in the biosynthesis of riboflavin. In Anaeromyxobacter dehalogenans (strain 2CP-C), this protein is 6,7-dimethyl-8-ribityllumazine synthase.